We begin with the raw amino-acid sequence, 402 residues long: Phosphoglycerate kinase (402 aa).

Substrate contacts are provided by residues 24–26 (DLN), Arg-39, 62–65 (HLGR), Arg-121, and Arg-161. ATP contacts are provided by residues Lys-211, Gly-299, Glu-330, and 359–362 (GGDS).

Belongs to the phosphoglycerate kinase family. As to quaternary structure, monomer.

Its subcellular location is the cytoplasm. The catalysed reaction is (2R)-3-phosphoglycerate + ATP = (2R)-3-phospho-glyceroyl phosphate + ADP. It functions in the pathway carbohydrate degradation; glycolysis; pyruvate from D-glyceraldehyde 3-phosphate: step 2/5. This chain is Phosphoglycerate kinase, found in Corynebacterium urealyticum (strain ATCC 43042 / DSM 7109).